Consider the following 352-residue polypeptide: Delta(7)-sterol 5(6)-desaturas erg3A (352 aa).

N39 is a glycosylation site (N-linked (GlcNAc...) asparagine). 3 helical membrane-spanning segments follow: residues 82–102 (FLSFFLIVWIFGIIVYFISAT), 128–147 (IAQTMRSMPVMSLLTAPFLV), and 167–187 (YYSILQFPLFIAFTDFCIYWI). The Fatty acid hydroxylase domain maps to 174 to 299 (PLFIAFTDFC…FTTLWDRLGG (126 aa)). A Histidine box-1 motif is present at residues 188-192 (HRGLH). The Histidine box-2 motif lies at 201-205 (HKPHH). A helical membrane pass occupies residues 231-251 (HVFPFIFPLQKLAYVFLFGFI). A Histidine box-3 motif is present at residues 276–280 (HTMHH).

The protein belongs to the sterol desaturase family. It depends on Fe cation as a cofactor.

The protein localises to the endoplasmic reticulum membrane. In terms of biological role, delta(7)-sterol 5(6)-desaturase; part of the third module of ergosterol biosynthesis pathway that includes the late steps of the pathway. Erg3A is a minor delta(7)-sterol 5(6)-desaturase within the ergosterol pathway, erg3B being the major one. The third module or late pathway involves the ergosterol synthesis itself through consecutive reactions that mainly occur in the endoplasmic reticulum (ER) membrane. Firstly, the squalene synthase erg9 catalyzes the condensation of 2 farnesyl pyrophosphate moieties to form squalene, which is the precursor of all steroids. Squalene synthase is crucial for balancing the incorporation of farnesyl diphosphate (FPP) into sterol and nonsterol isoprene synthesis. Secondly, squalene is converted into lanosterol by the consecutive action of the squalene epoxidase erg1 and the lanosterol synthase erg7. Then, the delta(24)-sterol C-methyltransferase erg6 methylates lanosterol at C-24 to produce eburicol. Eburicol is the substrate of the sterol 14-alpha demethylase encoded by cyp51A and cyp51B, to yield 4,4,24-trimethyl ergosta-8,14,24(28)-trienol. The C-14 reductase erg24 then reduces the C14=C15 double bond which leads to 4,4-dimethylfecosterol. A sequence of further demethylations at C-4, involving the C-4 demethylation complex containing the C-4 methylsterol oxidases erg25A or erg25B, the sterol-4-alpha-carboxylate 3-dehydrogenase erg26 and the 3-keto-steroid reductase erg27, leads to the production of fecosterol via 4-methylfecosterol. The C-8 sterol isomerase erg2 then catalyzes the reaction which results in unsaturation at C-7 in the B ring of sterols and thus converts fecosterol to episterol. The sterol-C5-desaturase erg3B then catalyzes the introduction of a C-5 double bond in the B ring to produce 5-dehydroepisterol. The 2 other sterol-C5-desaturases, erg3A and erg3C, seem to be less important in ergosterol biosynthesis. The C-22 sterol desaturase erg5 further converts 5-dehydroepisterol into ergosta-5,7,22,24(28)-tetraen-3beta-ol by forming the C-22(23) double bond in the sterol side chain. Finally, ergosta-5,7,22,24(28)-tetraen-3beta-ol is substrate of the C-24(28) sterol reductases erg4A and erg4B to produce ergosterol. Possible alternative sterol biosynthetic pathways might exist from fecosterol to ergosterol, depending on the activities of the erg3 isoforms. The sequence is that of Delta(7)-sterol 5(6)-desaturas erg3A from Aspergillus fumigatus (strain ATCC MYA-4609 / CBS 101355 / FGSC A1100 / Af293) (Neosartorya fumigata).